We begin with the raw amino-acid sequence, 405 residues long: MIQWFLKYRPRSLKDVENQDGAKKELQEWIESWLNGKPNAKAVLLHGPPGVGKTTLAEAVAHDYNLELLEMNASDSRKLQDIKGVAEKASVYGSIFGTRGKLILLDEVDGINVREDTGAIQGILELIEKTKYPIIMTANDPWNPALRELRNKTKMVGLNKLGKYPLRRLLKKICQAEKIICDDEALNYIIDTSEGDTRYAINMLQGIGEGYGKVTLDLVEAMARRKERELDPFETLRDIFWARYAWQAKNAATSAQIDYDMLIRWISENIPIQYDNIEDVWRAFDALSRASIFLKRAKGGDWDLLSYAYDLMSSGVAAAEIEKKKPNWKPKWKKYQFPSYIQLLSKSKDIRDTRDEIIKKLAIHSSFNKTLNDTYPFFLIFYKKYDKRLSLNTKEKEYLNSASKS.

47 to 54 (GPPGVGKT) contributes to the ATP binding site.

It belongs to the activator 1 small subunits family. RfcL subfamily. As to quaternary structure, heteromultimer composed of small subunits (RfcS) and large subunits (RfcL).

Its function is as follows. Part of the RFC clamp loader complex which loads the PCNA sliding clamp onto DNA. The sequence is that of Replication factor C large subunit from Saccharolobus islandicus (strain Y.N.15.51 / Yellowstone #2) (Sulfolobus islandicus).